Consider the following 119-residue polypeptide: Dihydroneopterin aldolase (119 aa).

Substrate contacts are provided by residues Glu21, Tyr53, and 72 to 73; that span reads VE. Catalysis depends on Lys98, which acts as the Proton donor/acceptor.

This sequence belongs to the DHNA family.

The catalysed reaction is 7,8-dihydroneopterin = 6-hydroxymethyl-7,8-dihydropterin + glycolaldehyde. The protein operates within cofactor biosynthesis; tetrahydrofolate biosynthesis; 2-amino-4-hydroxy-6-hydroxymethyl-7,8-dihydropteridine diphosphate from 7,8-dihydroneopterin triphosphate: step 3/4. Its function is as follows. Catalyzes the conversion of 7,8-dihydroneopterin to 6-hydroxymethyl-7,8-dihydropterin. The polypeptide is Dihydroneopterin aldolase (folB) (Streptomyces coelicolor (strain ATCC BAA-471 / A3(2) / M145)).